The sequence spans 284 residues: MPGQRLRKPEWLKLRMRTGPEFGDIQRLLSETSLNTVCRSAMCPNLQECWSRGTATFLLLGNVCTRSCRFCAIGTQQKPIPPDPKEPARIAGAVTAMKLNFVVLTSVNRDDLPDGGARHWTETMKAIRLSSPDAGLECLIPDFEGNDEALDMVMNERPDVLNHNIETVPRLYTNVRPEASYNQSLSILDRALTLHGLATKSGMMVGMGETFEEVVASMKDLREAGCSRLTIGQYLQPTASHFPVERYVPPEEFDAYRDEALGMGFSTVQSGPFVRSSYLAGSEE.

Cysteine 38, cysteine 43, cysteine 49, cysteine 64, cysteine 68, cysteine 71, and serine 277 together coordinate [4Fe-4S] cluster. One can recognise a Radical SAM core domain in the interval tryptophan 50–serine 266.

It belongs to the radical SAM superfamily. Lipoyl synthase family. The cofactor is [4Fe-4S] cluster.

The protein localises to the cytoplasm. The catalysed reaction is [[Fe-S] cluster scaffold protein carrying a second [4Fe-4S](2+) cluster] + N(6)-octanoyl-L-lysyl-[protein] + 2 oxidized [2Fe-2S]-[ferredoxin] + 2 S-adenosyl-L-methionine + 4 H(+) = [[Fe-S] cluster scaffold protein] + N(6)-[(R)-dihydrolipoyl]-L-lysyl-[protein] + 4 Fe(3+) + 2 hydrogen sulfide + 2 5'-deoxyadenosine + 2 L-methionine + 2 reduced [2Fe-2S]-[ferredoxin]. The protein operates within protein modification; protein lipoylation via endogenous pathway; protein N(6)-(lipoyl)lysine from octanoyl-[acyl-carrier-protein]: step 2/2. In terms of biological role, catalyzes the radical-mediated insertion of two sulfur atoms into the C-6 and C-8 positions of the octanoyl moiety bound to the lipoyl domains of lipoate-dependent enzymes, thereby converting the octanoylated domains into lipoylated derivatives. The sequence is that of Lipoyl synthase from Chlorobium phaeovibrioides (strain DSM 265 / 1930) (Prosthecochloris vibrioformis (strain DSM 265)).